A 271-amino-acid chain; its full sequence is Zinc finger protein 501 (271 aa).

C2H2-type zinc fingers lie at residues Ser-22–His-44, Tyr-50–His-72, Tyr-78–His-100, Tyr-106–His-128, Tyr-134–His-156, Phe-162–His-184, Tyr-190–His-212, Tyr-218–His-240, and Tyr-246–His-268.

This sequence belongs to the krueppel C2H2-type zinc-finger protein family.

The protein localises to the nucleus. It is found in the nucleolus. In terms of biological role, may be involved in transcriptional regulation. Essential for Golgi structural integrity. This is Zinc finger protein 501 (ZNF501) from Homo sapiens (Human).